The following is a 63-amino-acid chain: Large ribosomal subunit protein bL28 (63 aa).

This sequence belongs to the bacterial ribosomal protein bL28 family.

The chain is Large ribosomal subunit protein bL28 from Dictyoglomus thermophilum (strain ATCC 35947 / DSM 3960 / H-6-12).